The chain runs to 1135 residues: Envelopment polyprotein (1135 aa).

Positions 1 to 18 (MGIWKWLVMASLVWPVLT) are cleaved as a signal peptide. Residues 19–485 (LRNVYDMKIE…VPGFHGWATA (467 aa)) are Lumenal-facing. 11 disulfides stabilise this stretch: cysteine 29/cysteine 151, cysteine 63/cysteine 157, cysteine 109/cysteine 128, cysteine 133/cysteine 138, cysteine 175/cysteine 185, cysteine 210/cysteine 247, cysteine 234/cysteine 351, cysteine 376/cysteine 435, cysteine 380/cysteine 389, cysteine 405/cysteine 424, and cysteine 452/cysteine 475. Asparagine 134 is a glycosylation site (N-linked (GlcNAc...) asparagine; by host). Residues asparagine 235 and asparagine 347 are each glycosylated (N-linked (GlcNAc...) asparagine; by host). N-linked (GlcNAc...) asparagine; by host glycosylation is present at asparagine 399. A helical membrane pass occupies residues 486-506 (ALLVTFCFGWVLIPAITFIIL). Topologically, residues 507 to 627 (TILKFIANIF…LNLFRYKSRC (121 aa)) are cytoplasmic. The segment at 516–533 (FHTSNQENRLKSVLRKIK) is binding to the ribonucleoprotein. CCHC-type zinc fingers lie at residues 545-565 (CDVC…GVSC) and 570-591 (CPYC…YKVC). 3 binding to the ribonucleoprotein regions span residues 588-605 (YKVC…KKTV), 592-603 (QVTHRFRDDLKK), and 611-625 (TPGC…RYKS). The region spanning 611-634 (TPGCYRTLNLFRYKSRCYIFTMWI) is the ITAM domain. Positions 615–618 (YRTL) match the YxxL motif. A helical transmembrane segment spans residues 628-648 (YIFTMWIFLLVLESILWAASA). Residues 649–1105 (SETPLTPVWN…EWISGIFSGN (457 aa)) are Lumenal-facing. 8 disulfides stabilise this stretch: cysteine 735–cysteine 770, cysteine 739–cysteine 777, cysteine 751–cysteine 885, cysteine 765–cysteine 896, cysteine 780–cysteine 904, cysteine 806–cysteine 815, cysteine 823–cysteine 832, and cysteine 863–cysteine 867. The fusion loop stretch occupies residues 757 to 777 (YQYETSWGCNPSDCPGVGTGC). Asparagine 928 is a glycosylation site (N-linked (GlcNAc...) asparagine; by host). Cystine bridges form between cysteine 970–cysteine 1000, cysteine 993–cysteine 1045, cysteine 1010–cysteine 1015, cysteine 1046–cysteine 1051, and cysteine 1085–cysteine 1089. Residues 1106-1126 (WIVLIVLCVFLLFSLVLLSIL) form a helical membrane-spanning segment. A binding to the ribonucleoprotein region spans residues 1122–1135 (LLSILCPVRKHKKS). Residues 1127–1135 (CPVRKHKKS) lie on the Cytoplasmic side of the membrane.

The protein belongs to the hantavirus envelope glycoprotein family. Homodimer. Homotetramer; forms heterotetrameric Gn-Gc spikes in the pre-fusion conformation. Interacts (via C-terminus) with the nucleoprotein. Interacts with host TUFM; this interaction contributes to the virus-induced degradation of mitochondria by autophagy, which leads to degradation of host MAVS and inhibition of type I interferon (IFN) responses. Interacts with host MAP1LC3B; this interaction contributes to the virus-induced degradation of mitochondria by autophagy, which leads to degradation of host MAVS and inhibition of type I interferon (IFN) responses. As to quaternary structure, homodimer. Homotetramer; forms heterotetrameric Gn-Gc spikes in the pre-fusion conformation. Homotrimer; forms homotrimer in the post-fusion conformation at acidic pH. Interacts (via C-terminus) with the nucleoprotein. In terms of processing, envelope polyprotein precursor is quickly cleaved in vivo just after synthesis, presumably by host signal peptidase.

It is found in the virion membrane. It localises to the host cell surface. The protein localises to the host Golgi apparatus membrane. The protein resides in the host endoplasmic reticulum membrane. Its subcellular location is the host mitochondrion. Functionally, forms homotetramers with glycoprotein C at the surface of the virion. Attaches the virion to host cell receptors including integrin ITGAV/ITGB3. This attachment induces virion internalization predominantly through clathrin-dependent endocytosis. May also bind to host C1QBP for virus entry into the host cell. Mediates the assembly and budding of infectious virus particles through its interaction with the nucleocapsid protein and the viral genome. May dysregulate normal immune and endothelial cell responses through an ITAM motif. Translocates to mitochondria, binds to host TUFM and recruits MAP1LC3B. These interactions induce mitochondrial autophagy and therefore destruction of host MAVS leading to inhibition of type I interferon (IFN) responses. Concomitant breakdown of glycoprotein N is apparently prevented by the nucleoprotein that may inhibit Gn-stimulated autophagosome-lysosome fusion. Interacts with the viral genomic RNA. Forms homotetramers with glycoprotein N at the surface of the virion. Attaches the virion to host cell receptors including integrin ITGAV/ITGB3. This attachment induces virion internalization predominantly through clathrin-dependent endocytosis. May also bind to host C1QBP for virus entry into the host cell. Class II fusion protein that promotes fusion of viral membrane with host endosomal membrane after endocytosis of the virion. This chain is Envelopment polyprotein (GP), found in Hantaan virus (strain Lee) (Lee virus).